Consider the following 63-residue polypeptide: LKKSLFLVVFLGLATLSICEEEKRETEEEEYNQGEDDKSEEKRFLSLIPHAINAVSTLVHHFG.

Positions 1 to 19 are cleaved as a signal peptide; it reads LKKSLFLVVFLGLATLSIC. Positions 20–41 are excised as a propeptide; sequence EEEKRETEEEEYNQGEDDKSEE. Phenylalanine amide is present on Phe-62.

As to expression, expressed by the skin glands.

The protein localises to the secreted. Its function is as follows. Has antimicrobial activity. The sequence is that of Phylloseptin-Az1 from Pithecopus azureus (Orange-legged monkey tree frog).